Consider the following 159-residue polypeptide: Transmembrane protein 89 (159 aa).

An N-terminal signal peptide occupies residues 1–24; that stretch reads MLHVLASLPLLLLLVTSASTHAWS. Topologically, residues 25 to 63 are extracellular; the sequence is RPLWYQVGLDLQPWGCQPKSVEGCRGGLSCPGYWLGPGA. A helical membrane pass occupies residues 64–86; the sequence is SRIYPVAAVMITTTMLMICRKIL. Topologically, residues 87–159 are cytoplasmic; it reads QGRRRSQATK…QIKGTSTQSG (73 aa). The interval 91-110 is disordered; the sequence is RSQATKGEHPQVTTEPCGPW.

Its subcellular location is the membrane. The chain is Transmembrane protein 89 (TMEM89) from Homo sapiens (Human).